The chain runs to 767 residues: Protein SQS1 (767 aa).

The segment covering 1 to 17 (MAKRHSHYQGSRRRHAR) has biased composition (basic residues). The interval 1–60 (MAKRHSHYQGSRRRHARGSNSKKAGRGNAKGIQGRKIKKKPTPTNSWHNSSIPLGEGDLD) is disordered. Positions 42–52 (TPTNSWHNSSI) are enriched in polar residues. Ser-105 is subject to Phosphoserine. Acidic residues predominate over residues 176-185 (EDSENEDDDS). The interval 176–200 (EDSENEDDDSQNSPSTDHSLSSNES) is disordered. Residues Ser-217, Ser-255, Ser-334, Ser-343, and Ser-345 each carry the phosphoserine modification. The tract at residues 466–493 (YSDIPISDSSDEGDSYEGDSYEDDEDMA) is disordered. The segment covering 474–492 (SSDEGDSYEGDSYEDDEDM) has biased composition (acidic residues). Residues 594 to 656 (GLHIQNIKDE…HTSVVVEKIK (63 aa)) form the R3H domain. The G-patch domain maps to 720–767 (NENIGRRMLEKLGWKSGEGLGIQGNKGISEPIFAKIKKNRSGLRHSES).

This sequence belongs to the SQS1 family.

It is found in the cytoplasm. The protein resides in the nucleus. May be involved in splicing since overexpression antagonizes the suppression of splicing defects by SPP382 mutants. This is Protein SQS1 (SQS1) from Saccharomyces cerevisiae (strain YJM789) (Baker's yeast).